The chain runs to 299 residues: Cysteine synthase B (299 aa).

N6-(pyridoxal phosphate)lysine is present on Lys-40. Residues Asn-70, 174–178 (GTGGT), and Ser-261 each bind pyridoxal 5'-phosphate.

The protein belongs to the cysteine synthase/cystathionine beta-synthase family. The cofactor is pyridoxal 5'-phosphate.

The enzyme catalyses O-acetyl-L-serine + hydrogen sulfide = L-cysteine + acetate. It participates in amino-acid biosynthesis; L-cysteine biosynthesis; L-cysteine from L-serine: step 2/2. In Campylobacter jejuni subsp. jejuni serotype O:2 (strain ATCC 700819 / NCTC 11168), this protein is Cysteine synthase B (cysM).